We begin with the raw amino-acid sequence, 188 residues long: Threonylcarbamoyl-AMP synthase (188 aa).

In terms of domain architecture, YrdC-like spans 4-188 (VENLQQAVDA…ARSLQVLRQG (185 aa)).

The protein belongs to the SUA5 family. TsaC subfamily.

The protein resides in the cytoplasm. It carries out the reaction L-threonine + hydrogencarbonate + ATP = L-threonylcarbamoyladenylate + diphosphate + H2O. Its function is as follows. Required for the formation of a threonylcarbamoyl group on adenosine at position 37 (t(6)A37) in tRNAs that read codons beginning with adenine. Catalyzes the conversion of L-threonine, HCO(3)(-)/CO(2) and ATP to give threonylcarbamoyl-AMP (TC-AMP) as the acyladenylate intermediate, with the release of diphosphate. In Vibrio cholerae serotype O1 (strain ATCC 39541 / Classical Ogawa 395 / O395), this protein is Threonylcarbamoyl-AMP synthase.